The primary structure comprises 719 residues: Endonuclease MutS2 (719 aa).

273–280 lines the ATP pocket; the sequence is GPNTGGKT. Residues 644 to 719 form the Smr domain; that stretch reads LDLRGYRYED…GFGVTVATLK (76 aa).

The protein belongs to the DNA mismatch repair MutS family. MutS2 subfamily. Homodimer. Binds to stalled ribosomes, contacting rRNA.

Its function is as follows. Endonuclease that is involved in the suppression of homologous recombination and thus may have a key role in the control of bacterial genetic diversity. In terms of biological role, acts as a ribosome collision sensor, splitting the ribosome into its 2 subunits. Detects stalled/collided 70S ribosomes which it binds and splits by an ATP-hydrolysis driven conformational change. Acts upstream of the ribosome quality control system (RQC), a ribosome-associated complex that mediates the extraction of incompletely synthesized nascent chains from stalled ribosomes and their subsequent degradation. Probably generates substrates for RQC. The chain is Endonuclease MutS2 from Staphylococcus aureus.